We begin with the raw amino-acid sequence, 246 residues long: 4-hydroxy-tetrahydrodipicolinate reductase (246 aa).

Residues 8-13, Asp-34, 74-76, and 101-104 each bind NAD(+); these read GALGRM, GTT, and APNF. His-131 (proton donor/acceptor) is an active-site residue. His-132 lines the (S)-2,3,4,5-tetrahydrodipicolinate pocket. Lys-135 serves as the catalytic Proton donor. 141–142 provides a ligand contact to (S)-2,3,4,5-tetrahydrodipicolinate; the sequence is GT.

Belongs to the DapB family.

Its subcellular location is the cytoplasm. It catalyses the reaction (S)-2,3,4,5-tetrahydrodipicolinate + NAD(+) + H2O = (2S,4S)-4-hydroxy-2,3,4,5-tetrahydrodipicolinate + NADH + H(+). It carries out the reaction (S)-2,3,4,5-tetrahydrodipicolinate + NADP(+) + H2O = (2S,4S)-4-hydroxy-2,3,4,5-tetrahydrodipicolinate + NADPH + H(+). It participates in amino-acid biosynthesis; L-lysine biosynthesis via DAP pathway; (S)-tetrahydrodipicolinate from L-aspartate: step 4/4. In terms of biological role, catalyzes the conversion of 4-hydroxy-tetrahydrodipicolinate (HTPA) to tetrahydrodipicolinate. The chain is 4-hydroxy-tetrahydrodipicolinate reductase from Thermobifida fusca (strain YX).